A 299-amino-acid chain; its full sequence is Homeobox protein ceh-24 (299 aa).

Residues 1 to 35 (MSEKETPSPVLDVKKEKNEETGIDEEKSSEDDCSK) show a composition bias toward basic and acidic residues. Disordered regions lie at residues 1–45 (MSEK…NPSK) and 208–263 (QEKE…SGVF). The homeobox DNA-binding region spans 150 to 209 (RRKRRVLFSQAQVYELERRFKQAKYLTAPEREQLANSIRLTPTQVKIWFQNHRYKCKRQE). Acidic residues predominate over residues 242 to 252 (DDKDDEEEEES).

It belongs to the NK-2 homeobox family. As to expression, expressed in the 8 vulval muscles, 8-10 ventral neurons in the head and in the most posterior pharyngeal muscle cell, m8. Expressed in SIA, SIB and SMB sublateral motor neurons, and in muscles of the pharynx and vulva.

It localises to the nucleus. Its function is as follows. Probable transcriptional regulator that is required in neural development for the normal formation of sublateral cholinergic motor neuron processes. Plays a role in regulating the expression of acetylcholine transporter protein unc-17 in the sublateral processes. In particular, it is required in sublateral motor neurons for a left-right turning behavior that occurs during the lethargus phase of the normal sleep process called 'flipping'. During 'flipping' animals rotate 180 degrees about their longitudinal axis. This is Homeobox protein ceh-24 from Caenorhabditis elegans.